The primary structure comprises 165 residues: Endoribonuclease YbeY (165 aa).

3 residues coordinate Zn(2+): His-119, His-123, and His-129.

This sequence belongs to the endoribonuclease YbeY family. Zn(2+) is required as a cofactor.

It is found in the cytoplasm. Functionally, single strand-specific metallo-endoribonuclease involved in late-stage 70S ribosome quality control and in maturation of the 3' terminus of the 16S rRNA. The sequence is that of Endoribonuclease YbeY from Streptomyces coelicolor (strain ATCC BAA-471 / A3(2) / M145).